The sequence spans 329 residues: Serine/threonine-protein phosphatase PP2A catalytic subunit (329 aa).

Positions 1-25 are disordered; that stretch reads MDNNMEIDAARSPEPHHLSPTTDPG. Positions 8-17 are enriched in basic and acidic residues; the sequence is DAARSPEPHH. Residues Asp77, His79, Asp105, and Asn137 each coordinate Mn(2+). Catalysis depends on His138, which acts as the Proton donor. Positions 187 and 261 each coordinate Mn(2+). Leu329 carries the post-translational modification Leucine methyl ester.

The protein belongs to the PPP phosphatase family. PP-2A subfamily. The cofactor is Mn(2+).

It carries out the reaction O-phospho-L-seryl-[protein] + H2O = L-seryl-[protein] + phosphate. The enzyme catalyses O-phospho-L-threonyl-[protein] + H2O = L-threonyl-[protein] + phosphate. Its function is as follows. Involved in hyphal morphogenesis. The sequence is that of Serine/threonine-protein phosphatase PP2A catalytic subunit (pphA) from Emericella nidulans (strain FGSC A4 / ATCC 38163 / CBS 112.46 / NRRL 194 / M139) (Aspergillus nidulans).